The following is a 355-amino-acid chain: MNPIRKIIHIDMDCFYAAIEMRDFPELANKPIAVGGDAKRRGVIATCNYAARQFGIRSAMPTAHALKLCRELILRPVRMDVYQKESQYIRSLLTEYTDLIEPLSLDEAYLDVTESTQCQGSATWIAEEIRARIYQTRQLTASAGIAPNKSLAKIASDWHKPNGQMVIRPEDVSAFVLDLPVRKLFGVGPKMEEKLGALNIKTCADLQRYSVEYLLQKFGTMGQRLYELARGIDNRPVNPERIRKSISVEETYPKDLPNSEACLAVLPELMARLEARIQRAGKISGIHNLFVKLKFNDFQQTTIERVMDKLDLIVLRQLIQEGFARRGMPVRLLGIGIKLKQENTYQSVQLPLLDL.

The region spanning Ile-7–Gly-188 is the UmuC domain. Residues Asp-11 and Asp-106 each coordinate Mg(2+). The active site involves Glu-107.

It belongs to the DNA polymerase type-Y family. In terms of assembly, monomer. The cofactor is Mg(2+).

It is found in the cytoplasm. It carries out the reaction DNA(n) + a 2'-deoxyribonucleoside 5'-triphosphate = DNA(n+1) + diphosphate. In terms of biological role, poorly processive, error-prone DNA polymerase involved in untargeted mutagenesis. Copies undamaged DNA at stalled replication forks, which arise in vivo from mismatched or misaligned primer ends. These misaligned primers can be extended by PolIV. Exhibits no 3'-5' exonuclease (proofreading) activity. May be involved in translesional synthesis, in conjunction with the beta clamp from PolIII. The sequence is that of DNA polymerase IV from Legionella pneumophila (strain Corby).